The chain runs to 293 residues: Pyridoxal 5'-phosphate synthase subunit PdxS (293 aa).

D23 serves as a coordination point for D-ribose 5-phosphate. K80 acts as the Schiff-base intermediate with D-ribose 5-phosphate in catalysis. Residue G152 participates in D-ribose 5-phosphate binding. A D-glyceraldehyde 3-phosphate-binding site is contributed by R164. D-ribose 5-phosphate contacts are provided by residues G213 and 234–235; that span reads GS.

Belongs to the PdxS/SNZ family. In terms of assembly, in the presence of PdxT, forms a dodecamer of heterodimers.

It carries out the reaction aldehydo-D-ribose 5-phosphate + D-glyceraldehyde 3-phosphate + L-glutamine = pyridoxal 5'-phosphate + L-glutamate + phosphate + 3 H2O + H(+). Its pathway is cofactor biosynthesis; pyridoxal 5'-phosphate biosynthesis. Its function is as follows. Catalyzes the formation of pyridoxal 5'-phosphate from ribose 5-phosphate (RBP), glyceraldehyde 3-phosphate (G3P) and ammonia. The ammonia is provided by the PdxT subunit. Can also use ribulose 5-phosphate and dihydroxyacetone phosphate as substrates, resulting from enzyme-catalyzed isomerization of RBP and G3P, respectively. This Herpetosiphon aurantiacus (strain ATCC 23779 / DSM 785 / 114-95) protein is Pyridoxal 5'-phosphate synthase subunit PdxS.